A 425-amino-acid polypeptide reads, in one-letter code: GTPase Obg (425 aa).

One can recognise an Obg domain in the interval 1–158 (MFVDVARIYV…RWLLLELKVV (158 aa)). Positions 159–330 (ADVGLVGFPN…LLEAAYDLIR (172 aa)) constitute an OBG-type G domain. GTP contacts are provided by residues 165 to 172 (GFPNAGKS), 190 to 194 (FTTLT), 212 to 215 (DIPG), 282 to 285 (NKMD), and 311 to 313 (SGA). The Mg(2+) site is built by S172 and T192. The 78-residue stretch at 345–422 (VYRPKEEGWR…VCDIEFELMA (78 aa)) folds into the OCT domain.

The protein belongs to the TRAFAC class OBG-HflX-like GTPase superfamily. OBG GTPase family. In terms of assembly, monomer. The cofactor is Mg(2+).

The protein localises to the cytoplasm. Its function is as follows. An essential GTPase which binds GTP, GDP and possibly (p)ppGpp with moderate affinity, with high nucleotide exchange rates and a fairly low GTP hydrolysis rate. Plays a role in control of the cell cycle, stress response, ribosome biogenesis and in those bacteria that undergo differentiation, in morphogenesis control. The protein is GTPase Obg of Symbiobacterium thermophilum (strain DSM 24528 / JCM 14929 / IAM 14863 / T).